We begin with the raw amino-acid sequence, 426 residues long: Serine--tRNA ligase (426 aa).

230–232 (TAE) provides a ligand contact to L-serine. Residue 261 to 263 (RSE) coordinates ATP. E284 contributes to the L-serine binding site. An ATP-binding site is contributed by 348–351 (EISS). Residue S384 coordinates L-serine.

Belongs to the class-II aminoacyl-tRNA synthetase family. Type-1 seryl-tRNA synthetase subfamily. As to quaternary structure, homodimer. The tRNA molecule binds across the dimer.

Its subcellular location is the cytoplasm. The enzyme catalyses tRNA(Ser) + L-serine + ATP = L-seryl-tRNA(Ser) + AMP + diphosphate + H(+). It catalyses the reaction tRNA(Sec) + L-serine + ATP = L-seryl-tRNA(Sec) + AMP + diphosphate + H(+). The protein operates within aminoacyl-tRNA biosynthesis; selenocysteinyl-tRNA(Sec) biosynthesis; L-seryl-tRNA(Sec) from L-serine and tRNA(Sec): step 1/1. Catalyzes the attachment of serine to tRNA(Ser). Is also able to aminoacylate tRNA(Sec) with serine, to form the misacylated tRNA L-seryl-tRNA(Sec), which will be further converted into selenocysteinyl-tRNA(Sec). The chain is Serine--tRNA ligase from Novosphingobium aromaticivorans (strain ATCC 700278 / DSM 12444 / CCUG 56034 / CIP 105152 / NBRC 16084 / F199).